We begin with the raw amino-acid sequence, 327 residues long: Malate dehydrogenase 1 (327 aa).

12 to 18 (GAAGQIA) lines the NAD(+) pocket. Substrate contacts are provided by Arg-93 and Arg-99. NAD(+) contacts are provided by residues Asn-106, Gln-113, and 130 to 132 (VGN). Asn-132 and Arg-163 together coordinate substrate. His-188 serves as the catalytic Proton acceptor.

It belongs to the LDH/MDH superfamily. MDH type 2 family.

It catalyses the reaction (S)-malate + NAD(+) = oxaloacetate + NADH + H(+). Its function is as follows. Catalyzes the reversible oxidation of malate to oxaloacetate. The polypeptide is Malate dehydrogenase 1 (Burkholderia thailandensis (strain ATCC 700388 / DSM 13276 / CCUG 48851 / CIP 106301 / E264)).